A 330-amino-acid polypeptide reads, in one-letter code: Ferredoxin--NADP reductase (330 aa).

The FAD site is built by Glu-35, Gln-43, Tyr-48, Val-90, Phe-123, Asp-285, and Thr-326.

Belongs to the ferredoxin--NADP reductase type 2 family. Homodimer. The cofactor is FAD.

It carries out the reaction 2 reduced [2Fe-2S]-[ferredoxin] + NADP(+) + H(+) = 2 oxidized [2Fe-2S]-[ferredoxin] + NADPH. The chain is Ferredoxin--NADP reductase from Streptococcus pyogenes serotype M6 (strain ATCC BAA-946 / MGAS10394).